The following is a 207-amino-acid chain: Large ribosomal subunit protein uL4 (207 aa).

The segment at 45–78 (RQGTHAVKNRSAVRGGGRKPWRQKGTGRARQGSI) is disordered. Residues 60-71 (GGRKPWRQKGTG) show a composition bias toward basic residues.

The protein belongs to the universal ribosomal protein uL4 family. As to quaternary structure, part of the 50S ribosomal subunit.

Its function is as follows. One of the primary rRNA binding proteins, this protein initially binds near the 5'-end of the 23S rRNA. It is important during the early stages of 50S assembly. It makes multiple contacts with different domains of the 23S rRNA in the assembled 50S subunit and ribosome. Functionally, forms part of the polypeptide exit tunnel. This chain is Large ribosomal subunit protein uL4, found in Pediococcus pentosaceus (strain ATCC 25745 / CCUG 21536 / LMG 10740 / 183-1w).